The sequence spans 650 residues: Histone-lysine N-methyltransferase family member SUVH9 (650 aa).

2 disordered regions span residues 1-24 (MGSS…KLEP) and 95-129 (PVEE…RSSE). Positions 7 to 20 (PLDPSLNPSPSLIP) are enriched in low complexity. The span at 107–118 (YSTSDSSPSVAT) shows a compositional bias: polar residues. The 148-residue stretch at 205–352 (GSIPGVQVGD…FGVFKYRLER (148 aa)) folds into the YDG domain. One can recognise a Pre-SET domain in the interval 432–490 (SGCDCVNGCGSGCLCEAKNSGEIAYDYNGTLIRQKPLIHECGSACQCPPSCRNRVTQKG). C434, C436, C440, C444, C446, C472, C476, C478, and C482 together coordinate Zn(2+). Positions 493 to 637 (NRLEVFRSLE…PMTELSLDYG (145 aa)) constitute an SET domain.

This sequence belongs to the class V-like SAM-binding methyltransferase superfamily. Histone-lysine methyltransferase family. Suvar3-9 subfamily. As to quaternary structure, component of an RNA-directed DNA methylation (RdDM) complex that contains at least MORC6, MORC1/CRT1, MORC2, SWI3D and SUVH9. Interacts directly with MORC6, MORC2 and MORC1/CRT1. Interacts with SWI3B, SWI3C and SWI3D.

The protein localises to the nucleus. It localises to the chromosome. The protein resides in the centromere. Histone methyltransferase family member that plays a role in gene silencing. Together with MORC6 and SUVH2, regulates the silencing of some transposable elements (TEs). According to PubMed:19043555, the protein does not bind S-adenosyl-L-methionine and lacks methyltransferase activity. Instead, it may function downstream of DRM2 in RNA-directed DNA methylation, binding to methylated DNA and recruiting DNA-directed RNA polymerase V to chromatin. This Arabidopsis thaliana (Mouse-ear cress) protein is Histone-lysine N-methyltransferase family member SUVH9 (SUVH9).